Consider the following 717-residue polypeptide: Aryl hydrocarbon receptor nuclear translocator 2 (717 aa).

Disordered stretches follow at residues 1–20 (MATP…PGSV) and 35–74 (MAGA…IERR). R42 is modified (omega-N-methylarginine). The span at 63–73 (FSRENHSEIER) shows a compositional bias: basic and acidic residues. One can recognise a bHLH domain in the interval 63 to 116 (FSRENHSEIERRRRNKMTQYITELSDMVPTCSALARKPDKLTILRMAVSHMKSM). PAS domains are found at residues 134-209 (TEQE…MTGR) and 323-393 (PVCM…VKLK). The PAC domain maps to 398–441 (SVMYRFRTKNREWMLIRTSSFTFQNPYSDEIEYIICTNTNVKQL). Positions 548–717 (NDIQSSSSTG…DLGMFPPFSE (170 aa)) are disordered. Composition is skewed to polar residues over residues 549–574 (DIQS…QVAW) and 585–605 (QIPS…TSHT). The segment covering 610-625 (PSSYSPLSSPATSSPS) has biased composition (low complexity). Residues 642 to 651 (SGQSSGQFQG) show a composition bias toward polar residues. Positions 658 to 680 (SQWQSQHHGQQSGEQHSHQQPGQ) are enriched in low complexity.

As to quaternary structure, efficient DNA binding requires dimerization with another bHLH protein. Heterodimer with NPAS4. Heterodimer with SIM1. Heterodimer with the aryl hydrocarbon receptor (AHR) or the SIM1 protein. Interacts with TACC3.

It is found in the nucleus. Functionally, transcription factor that plays a role in the development of the hypothalamo-pituitary axis, postnatal brain growth, and visual and renal function. Specifically recognizes the xenobiotic response element (XRE). The chain is Aryl hydrocarbon receptor nuclear translocator 2 (ARNT2) from Homo sapiens (Human).